A 352-amino-acid polypeptide reads, in one-letter code: Histidinol-phosphate aminotransferase (352 aa).

Lys210 is subject to N6-(pyridoxal phosphate)lysine.

Belongs to the class-II pyridoxal-phosphate-dependent aminotransferase family. Histidinol-phosphate aminotransferase subfamily. Homodimer. The cofactor is pyridoxal 5'-phosphate.

The enzyme catalyses L-histidinol phosphate + 2-oxoglutarate = 3-(imidazol-4-yl)-2-oxopropyl phosphate + L-glutamate. It functions in the pathway amino-acid biosynthesis; L-histidine biosynthesis; L-histidine from 5-phospho-alpha-D-ribose 1-diphosphate: step 7/9. The chain is Histidinol-phosphate aminotransferase from Clostridium acetobutylicum (strain ATCC 824 / DSM 792 / JCM 1419 / IAM 19013 / LMG 5710 / NBRC 13948 / NRRL B-527 / VKM B-1787 / 2291 / W).